The following is a 53-amino-acid chain: Ferredoxin B (53 aa).

The N-terminal extension stretch occupies residues 1-35; it reads GIDPNYRSLPVVKEEQGVKIYGTYEPPTKLGIWGT. An N6-methyllysine modification is found at Lys29. The 20-residue stretch at 34 to 53 folds into the 4Fe-4S ferredoxin-type 1 domain; that stretch reads GTIVGVDFDLCIADGSCINA. [3Fe-4S] cluster contacts are provided by Cys44 and Cys50.

The cofactor is [3Fe-4S] cluster. It depends on [4Fe-4S] cluster as a cofactor.

In terms of biological role, ferredoxins are iron-sulfur proteins that transfer electrons in a wide variety of metabolic reactions. The chain is Ferredoxin B from Sulfuracidifex metallicus (Sulfolobus metallicus).